The chain runs to 473 residues: 1-aminocyclopropane-1-carboxylate synthase (473 aa).

Substrate-binding positions include 84-85 (DY), tyrosine 145, and aspartate 151. Residue lysine 273 is modified to N6-(pyridoxal phosphate)lysine.

Belongs to the class-I pyridoxal-phosphate-dependent aminotransferase family. As to quaternary structure, homodimer. Pyridoxal 5'-phosphate is required as a cofactor.

It catalyses the reaction S-adenosyl-L-methionine = 1-aminocyclopropane-1-carboxylate + S-methyl-5'-thioadenosine + H(+). It carries out the reaction (2S)-2-amino-3-butenoate + H2O = 2-oxobutanoate + NH4(+). Its pathway is alkene biosynthesis; ethylene biosynthesis via S-adenosyl-L-methionine; ethylene from S-adenosyl-L-methionine: step 1/2. With respect to regulation, inhibited by L-aminoethoxyvinylglycine (AVG). Inhibited by L-vinylglycine (L-VG). Inhibited by S-methylmethionine through a L-VG ketimine intermediate. Its function is as follows. Catalyzes the formation of 1-aminocyclopropane-1-carboxylate, a direct precursor of ethylene in higher plants. Also catalyzes the conversion of L-vinylglycine (L-VG) to alpha-ketobutyrate and ammonia. Can use S-methylmethionine as substrate. The chain is 1-aminocyclopropane-1-carboxylate synthase from Malus domestica (Apple).